A 354-amino-acid polypeptide reads, in one-letter code: Ferrochelatase (354 aa).

Fe cation is bound by residues H214 and E295.

This sequence belongs to the ferrochelatase family.

It is found in the cytoplasm. It carries out the reaction heme b + 2 H(+) = protoporphyrin IX + Fe(2+). The protein operates within porphyrin-containing compound metabolism; protoheme biosynthesis; protoheme from protoporphyrin-IX: step 1/1. Catalyzes the ferrous insertion into protoporphyrin IX. The protein is Ferrochelatase of Burkholderia orbicola (strain AU 1054).